The sequence spans 29 residues: Galanin (29 aa).

Ala-29 is subject to Alanine amide.

It belongs to the galanin family.

The protein localises to the secreted. Functionally, contracts smooth muscle of the gastrointestinal and genitourinary tract, regulates growth hormone release, modulates insulin release, and may be involved in the control of adrenal secretion. The chain is Galanin (GAL) from Ovis aries (Sheep).